Here is a 376-residue protein sequence, read N- to C-terminus: Pyrimidine monooxygenase RutA (376 aa).

FMN-binding positions include 61-62 (IK), asparagine 127, glutamate 136, 152-153 (RY), and serine 202.

The protein belongs to the NtaA/SnaA/DszA monooxygenase family. RutA subfamily.

The enzyme catalyses uracil + FMNH2 + NADH + O2 = (Z)-3-ureidoacrylate + FMN + NAD(+) + H2O + H(+). The catalysed reaction is thymine + FMNH2 + NADH + O2 = (Z)-2-methylureidoacrylate + FMN + NAD(+) + H2O + H(+). In terms of biological role, catalyzes the pyrimidine ring opening between N-3 and C-4 by an unusual flavin hydroperoxide-catalyzed mechanism, adding oxygen atoms in the process to yield ureidoacrylate peracid, that immediately reacts with FMN forming ureidoacrylate and FMN-N(5)-oxide. The FMN-N(5)-oxide reacts spontaneously with NADH to produce FMN. Requires the flavin reductase RutF to regenerate FMN in vivo. The protein is Pyrimidine monooxygenase RutA of Methylorubrum populi (strain ATCC BAA-705 / NCIMB 13946 / BJ001) (Methylobacterium populi).